A 329-amino-acid polypeptide reads, in one-letter code: Aspartate--ammonia ligase (329 aa).

The protein belongs to the class-II aminoacyl-tRNA synthetase family. AsnA subfamily.

The protein localises to the cytoplasm. The enzyme catalyses L-aspartate + NH4(+) + ATP = L-asparagine + AMP + diphosphate + H(+). The protein operates within amino-acid biosynthesis; L-asparagine biosynthesis; L-asparagine from L-aspartate (ammonia route): step 1/1. The sequence is that of Aspartate--ammonia ligase from Ureaplasma parvum serovar 3 (strain ATCC 27815 / 27 / NCTC 11736).